A 612-amino-acid chain; its full sequence is Glutamine--fructose-6-phosphate aminotransferase [isomerizing] (612 aa).

Cysteine 2 serves as the catalytic Nucleophile; for GATase activity. One can recognise a Glutamine amidotransferase type-2 domain in the interval 2-220; it reads CGIVGAIRAH…DGDIALLASD (219 aa). 2 SIS domains span residues 288–428 and 461–602; these read AKSV…VRGL and WAQQ…VDKP. Residue lysine 607 is the For Fru-6P isomerization activity of the active site.

In terms of assembly, homodimer.

It is found in the cytoplasm. The enzyme catalyses D-fructose 6-phosphate + L-glutamine = D-glucosamine 6-phosphate + L-glutamate. In terms of biological role, catalyzes the first step in hexosamine metabolism, converting fructose-6P into glucosamine-6P using glutamine as a nitrogen source. The polypeptide is Glutamine--fructose-6-phosphate aminotransferase [isomerizing] (Neisseria meningitidis serogroup B (strain ATCC BAA-335 / MC58)).